We begin with the raw amino-acid sequence, 347 residues long: UDP-3-O-acylglucosamine N-acyltransferase (347 aa).

The active-site Proton acceptor is H245.

It belongs to the transferase hexapeptide repeat family. LpxD subfamily. In terms of assembly, homotrimer.

The catalysed reaction is a UDP-3-O-[(3R)-3-hydroxyacyl]-alpha-D-glucosamine + a (3R)-hydroxyacyl-[ACP] = a UDP-2-N,3-O-bis[(3R)-3-hydroxyacyl]-alpha-D-glucosamine + holo-[ACP] + H(+). The protein operates within bacterial outer membrane biogenesis; LPS lipid A biosynthesis. Functionally, catalyzes the N-acylation of UDP-3-O-acylglucosamine using 3-hydroxyacyl-ACP as the acyl donor. Is involved in the biosynthesis of lipid A, a phosphorylated glycolipid that anchors the lipopolysaccharide to the outer membrane of the cell. The chain is UDP-3-O-acylglucosamine N-acyltransferase from Chromohalobacter salexigens (strain ATCC BAA-138 / DSM 3043 / CIP 106854 / NCIMB 13768 / 1H11).